We begin with the raw amino-acid sequence, 579 residues long: Vitamin B6 transporter TPN1 (579 aa).

12 consecutive transmembrane segments (helical) span residues 99–119 (TGGL…GLSF), 123–143 (LASS…CSIM), 158–178 (LFGW…VMGW), 199–219 (PLWV…IFGI), 222–242 (VIKV…LLYI), 275–295 (LCYS…ILFP), 303–323 (IFCL…ILGL), 363–383 (VVVL…SAAF), 395–415 (IPRW…ALIG), 422–442 (ILGN…ILLF), 520–540 (FAFI…YWIG), and 546–566 (FGEY…GVVY).

This sequence belongs to the purine-cytosine permease (2.A.39) family.

It localises to the membrane. Its function is as follows. Thiamine-regulated, high affinity import carrier of pyridoxine, pyridoxal and pyridoxamine. In Saccharomyces cerevisiae (Baker's yeast), this protein is Vitamin B6 transporter TPN1 (TPN1).